The sequence spans 235 residues: Ubiquinone/menaquinone biosynthesis C-methyltransferase UbiE (235 aa).

Positions 60, 81, and 126 each coordinate S-adenosyl-L-methionine.

This sequence belongs to the class I-like SAM-binding methyltransferase superfamily. MenG/UbiE family.

It carries out the reaction a 2-demethylmenaquinol + S-adenosyl-L-methionine = a menaquinol + S-adenosyl-L-homocysteine + H(+). The enzyme catalyses a 2-methoxy-6-(all-trans-polyprenyl)benzene-1,4-diol + S-adenosyl-L-methionine = a 5-methoxy-2-methyl-3-(all-trans-polyprenyl)benzene-1,4-diol + S-adenosyl-L-homocysteine + H(+). It participates in quinol/quinone metabolism; menaquinone biosynthesis; menaquinol from 1,4-dihydroxy-2-naphthoate: step 2/2. The protein operates within cofactor biosynthesis; ubiquinone biosynthesis. Its function is as follows. Methyltransferase required for the conversion of demethylmenaquinol (DMKH2) to menaquinol (MKH2) and the conversion of 2-polyprenyl-6-methoxy-1,4-benzoquinol (DDMQH2) to 2-polyprenyl-3-methyl-6-methoxy-1,4-benzoquinol (DMQH2). This Citrifermentans bemidjiense (strain ATCC BAA-1014 / DSM 16622 / JCM 12645 / Bem) (Geobacter bemidjiensis) protein is Ubiquinone/menaquinone biosynthesis C-methyltransferase UbiE.